We begin with the raw amino-acid sequence, 397 residues long: Homoserine O-acetyltransferase (397 aa).

The AB hydrolase-1 domain maps to 58–368; the sequence is NAVLVLHALT…EAKWGHDAFL (311 aa). The active-site Nucleophile is the Ser164. Arg233 lines the substrate pocket. Active-site residues include Asp331 and His364. A substrate-binding site is contributed by Asp365.

It belongs to the AB hydrolase superfamily. MetX family. In terms of assembly, homodimer.

It is found in the cytoplasm. It catalyses the reaction L-homoserine + acetyl-CoA = O-acetyl-L-homoserine + CoA. Its pathway is amino-acid biosynthesis; L-methionine biosynthesis via de novo pathway; O-acetyl-L-homoserine from L-homoserine: step 1/1. Transfers an acetyl group from acetyl-CoA to L-homoserine, forming acetyl-L-homoserine. In Solidesulfovibrio magneticus (strain ATCC 700980 / DSM 13731 / RS-1) (Desulfovibrio magneticus), this protein is Homoserine O-acetyltransferase.